The following is a 628-amino-acid chain: DNA mismatch repair protein MutL (628 aa).

The segment at 335–411 is disordered; sequence SVDIEPESEQ…ASRNSEVSLP (77 aa). A compositionally biased stretch (polar residues) spans 343-353; that stretch reads EQTTAWQTSPT.

The protein belongs to the DNA mismatch repair MutL/HexB family.

Its function is as follows. This protein is involved in the repair of mismatches in DNA. It is required for dam-dependent methyl-directed DNA mismatch repair. May act as a 'molecular matchmaker', a protein that promotes the formation of a stable complex between two or more DNA-binding proteins in an ATP-dependent manner without itself being part of a final effector complex. The chain is DNA mismatch repair protein MutL from Shewanella pealeana (strain ATCC 700345 / ANG-SQ1).